Consider the following 236-residue polypeptide: tRNA (guanine-N(1)-)-methyltransferase (236 aa).

Residues G110 and 129–134 (LGDFVL) each bind S-adenosyl-L-methionine.

This sequence belongs to the RNA methyltransferase TrmD family. In terms of assembly, homodimer.

The protein resides in the cytoplasm. The catalysed reaction is guanosine(37) in tRNA + S-adenosyl-L-methionine = N(1)-methylguanosine(37) in tRNA + S-adenosyl-L-homocysteine + H(+). Functionally, specifically methylates guanosine-37 in various tRNAs. The polypeptide is tRNA (guanine-N(1)-)-methyltransferase (Clostridium perfringens (strain SM101 / Type A)).